The primary structure comprises 546 residues: Glucose-6-phosphate isomerase (546 aa).

The active-site Proton donor is the Glu-357. Residues His-389 and Lys-509 contribute to the active site.

This sequence belongs to the GPI family.

Its subcellular location is the cytoplasm. The enzyme catalyses alpha-D-glucose 6-phosphate = beta-D-fructose 6-phosphate. The protein operates within carbohydrate biosynthesis; gluconeogenesis. It participates in carbohydrate degradation; glycolysis; D-glyceraldehyde 3-phosphate and glycerone phosphate from D-glucose: step 2/4. In terms of biological role, catalyzes the reversible isomerization of glucose-6-phosphate to fructose-6-phosphate. The chain is Glucose-6-phosphate isomerase from Anaeromyxobacter sp. (strain K).